Reading from the N-terminus, the 545-residue chain is MTLLTQSSTWQALSAHSKNVPHMRELFATDAARFNKMSLSACGLLLDYSKNRATAETLDLLFTLASNSQLEAKIKAMFAGEIINTTEKRAVLHTALRSTAEQSIIAEGQDIVPEVQQTLNKMQGFVSSVTSGQWKGYTGKAITDIVSIGIGGSFLGPKIVSQALRPYWNPELKCHFVANVDGTSISEKLKLLDPETTLFIMSSKSFGTQETLTNTLTAREWFLAKGGLQSDVAKHFVAVTSNVAKATDFGIDADNIFPMWDWVGGRYSLWSAIGLPIALLIGMDNFRALLSGAHQMDEHFANAPLTENMPVIMGLLSLWYGNFFNAQSHVVLTYDHYLRGLPAYFQQLDMESNGKSVTLNGTDVDYSTGPVIWGGEGTNGQHAYHQLLHQGTALIPADFIMPLQSHNPIGEHHDQLASNCFGQTQALMQGRTFDEALAELANSALPAAEKQLIAKHKVMPGNKPSNTLLMDKLTPSTLGALIALYEHRTFVQGAIWDINSFDQWGVELGKDLGNDVLTRIGASQDCDALDASSNALINLYRHGKI.

Glutamate 351 functions as the Proton donor in the catalytic mechanism. Active-site residues include histidine 382 and lysine 510.

This sequence belongs to the GPI family.

It localises to the cytoplasm. It catalyses the reaction alpha-D-glucose 6-phosphate = beta-D-fructose 6-phosphate. The protein operates within carbohydrate biosynthesis; gluconeogenesis. Its pathway is carbohydrate degradation; glycolysis; D-glyceraldehyde 3-phosphate and glycerone phosphate from D-glucose: step 2/4. Functionally, catalyzes the reversible isomerization of glucose-6-phosphate to fructose-6-phosphate. The polypeptide is Glucose-6-phosphate isomerase (Shewanella baltica (strain OS195)).